The primary structure comprises 545 residues: CTP synthase (545 aa).

The amidoligase domain stretch occupies residues 1–264 (MQYIVVTGGV…ITRLSKLLNM (264 aa)). A CTP-binding site is contributed by Ser12. Ser12 contacts UTP. 13-18 (GLGKGT) contacts ATP. Tyr53 provides a ligand contact to L-glutamine. Asp70 serves as a coordination point for ATP. Positions 70 and 140 each coordinate Mg(2+). CTP-binding positions include 147–149 (DIE), 185–190 (KTKPTQ), and Arg221. Residues 185 to 190 (KTKPTQ) and Arg221 each bind UTP. In terms of domain architecture, Glutamine amidotransferase type-1 spans 294–527 (YVDLHDAYIS…VEQALIFKHR (234 aa)). Gly347 lines the L-glutamine pocket. The active-site Nucleophile; for glutamine hydrolysis is Cys374. L-glutamine is bound by residues 375 to 378 (LGFQ), Glu398, and Arg455. Catalysis depends on residues His500 and Glu502.

Belongs to the CTP synthase family. Homotetramer.

It carries out the reaction UTP + L-glutamine + ATP + H2O = CTP + L-glutamate + ADP + phosphate + 2 H(+). The catalysed reaction is L-glutamine + H2O = L-glutamate + NH4(+). The enzyme catalyses UTP + NH4(+) + ATP = CTP + ADP + phosphate + 2 H(+). Its pathway is pyrimidine metabolism; CTP biosynthesis via de novo pathway; CTP from UDP: step 2/2. Allosterically activated by GTP, when glutamine is the substrate; GTP has no effect on the reaction when ammonia is the substrate. The allosteric effector GTP functions by stabilizing the protein conformation that binds the tetrahedral intermediate(s) formed during glutamine hydrolysis. Inhibited by the product CTP, via allosteric rather than competitive inhibition. Its function is as follows. Catalyzes the ATP-dependent amination of UTP to CTP with either L-glutamine or ammonia as the source of nitrogen. Regulates intracellular CTP levels through interactions with the four ribonucleotide triphosphates. This is CTP synthase from Thermoplasma acidophilum (strain ATCC 25905 / DSM 1728 / JCM 9062 / NBRC 15155 / AMRC-C165).